The chain runs to 249 residues: tRNA pseudouridine synthase A (249 aa).

The Nucleophile role is filled by D54. Y111 serves as a coordination point for substrate.

This sequence belongs to the tRNA pseudouridine synthase TruA family. As to quaternary structure, homodimer.

It catalyses the reaction uridine(38/39/40) in tRNA = pseudouridine(38/39/40) in tRNA. Formation of pseudouridine at positions 38, 39 and 40 in the anticodon stem and loop of transfer RNAs. In Mycoplasma capricolum subsp. capricolum (strain California kid / ATCC 27343 / NCTC 10154), this protein is tRNA pseudouridine synthase A.